The sequence spans 43 residues: MNRTMTSLLAMGAGALVYRMATQSDMLNNRSMKRMRRRITKMF.

This is an uncharacterized protein from Bacillus subtilis (strain 168).